Reading from the N-terminus, the 414-residue chain is GLABROUS1 enhancer-binding protein-like 3 (414 aa).

Disordered regions lie at residues Gln-36–Ser-57 and Gln-167–Val-191. The segment covering Arg-38–Thr-50 has biased composition (low complexity). The tract at residues Leu-382–Phe-403 is non-canonical leucine-zipper.

Belongs to the GeBP family. In terms of assembly, homo- and heterodimers. Interacts with GEBP, GPL1 and GPL2. Interacts with GEBP. In terms of tissue distribution, expressed in the apical meristem and young leaf primordia. Detected in the vascular tissues of rosette leaves, in primary and secondary roots and at the base of flowers and siliques.

It localises to the nucleus. Functionally, probable transcription factor. Involved in stress responses. Plays a repressive role in cell expansion by counteracting the positive role of CPR5 in this process, but does not regulate cell proliferation or endoreduplication. This Arabidopsis thaliana (Mouse-ear cress) protein is GLABROUS1 enhancer-binding protein-like 3.